The chain runs to 353 residues: Photosystem II protein D1 (353 aa).

T2 bears the N-acetylthreonine mark. Residue T2 is modified to Phosphothreonine. The next 3 helical transmembrane spans lie at 29 to 46 (YIGW…TATS), 118 to 133 (HFLL…EWEL), and 142 to 156 (WIAV…AATA). H118 is a chlorophyll a binding site. Y126 serves as a coordination point for pheophytin a. [CaMn4O5] cluster-binding residues include D170 and E189. A helical membrane pass occupies residues 197–218 (FHMLGVAGVFGGSLFSAMHGSL). H198 contributes to the chlorophyll a binding site. A quinone contacts are provided by residues H215 and 264–265 (SF). H215 lines the Fe cation pocket. H272 lines the Fe cation pocket. The helical transmembrane segment at 274-288 (FLAAWPVVGIWFTAL) threads the bilayer. [CaMn4O5] cluster-binding residues include H332, E333, D342, and A344. The propeptide occupies 345–353 (AVEAPSING).

The protein belongs to the reaction center PufL/M/PsbA/D family. PSII is composed of 1 copy each of membrane proteins PsbA, PsbB, PsbC, PsbD, PsbE, PsbF, PsbH, PsbI, PsbJ, PsbK, PsbL, PsbM, PsbT, PsbX, PsbY, PsbZ, Psb30/Ycf12, at least 3 peripheral proteins of the oxygen-evolving complex and a large number of cofactors. It forms dimeric complexes. The D1/D2 heterodimer binds P680, chlorophylls that are the primary electron donor of PSII, and subsequent electron acceptors. It shares a non-heme iron and each subunit binds pheophytin, quinone, additional chlorophylls, carotenoids and lipids. D1 provides most of the ligands for the Mn4-Ca-O5 cluster of the oxygen-evolving complex (OEC). There is also a Cl(-1) ion associated with D1 and D2, which is required for oxygen evolution. The PSII complex binds additional chlorophylls, carotenoids and specific lipids. serves as cofactor. In terms of processing, tyr-161 forms a radical intermediate that is referred to as redox-active TyrZ, YZ or Y-Z. Post-translationally, C-terminally processed by CTPA; processing is essential to allow assembly of the oxygen-evolving complex and thus photosynthetic growth.

Its subcellular location is the plastid. It localises to the chloroplast thylakoid membrane. It catalyses the reaction 2 a plastoquinone + 4 hnu + 2 H2O = 2 a plastoquinol + O2. Photosystem II (PSII) is a light-driven water:plastoquinone oxidoreductase that uses light energy to abstract electrons from H(2)O, generating O(2) and a proton gradient subsequently used for ATP formation. It consists of a core antenna complex that captures photons, and an electron transfer chain that converts photonic excitation into a charge separation. The D1/D2 (PsbA/PsbD) reaction center heterodimer binds P680, the primary electron donor of PSII as well as several subsequent electron acceptors. The protein is Photosystem II protein D1 of Illicium oligandrum (Star anise).